A 430-amino-acid polypeptide reads, in one-letter code: Acetyl-CoA acetyltransferase FG05087, mitochondrial (430 aa).

Residues 1 to 32 (MTVTQLRSAGRLAQLAGHVNGARQFSTRPALR) constitute a mitochondrion transit peptide. Cysteine 122 functions as the Acyl-thioester intermediate in the catalytic mechanism. K(+) is bound at residue tyrosine 217. Lysine 260 is a binding site for CoA. A K(+)-binding site is contributed by alanine 278. Residue serine 282 participates in CoA binding. Catalysis depends on proton acceptor residues histidine 385 and cysteine 413. Asparagine 414 lines the chloride pocket.

It belongs to the thiolase-like superfamily. Thiolase family. Homotetramer. Requires K(+) as cofactor.

The protein localises to the mitochondrion. The catalysed reaction is 2 acetyl-CoA = acetoacetyl-CoA + CoA. Mitochondrial acetyl-CoA acetyltransferase that catalyzes both the formation and degradation of acetoacetyl-CoA. Seems not to be involved in ergosterol biosynthesis. Plays an important role in growth, morphogenesis and maintaining mitochondrial function including the response to oxidative stresses. The sequence is that of Acetyl-CoA acetyltransferase FG05087, mitochondrial from Gibberella zeae (strain ATCC MYA-4620 / CBS 123657 / FGSC 9075 / NRRL 31084 / PH-1) (Wheat head blight fungus).